A 257-amino-acid chain; its full sequence is UPF0246 protein CV_1250 (257 aa).

Belongs to the UPF0246 family.

The chain is UPF0246 protein CV_1250 from Chromobacterium violaceum (strain ATCC 12472 / DSM 30191 / JCM 1249 / CCUG 213 / NBRC 12614 / NCIMB 9131 / NCTC 9757 / MK).